A 122-amino-acid chain; its full sequence is Small ribosomal subunit protein uS13 (122 aa).

The segment at 95-122 is disordered; that stretch reads SLPVRGQRTHTNARTRKGPAKSIAGKKK.

It belongs to the universal ribosomal protein uS13 family. As to quaternary structure, part of the 30S ribosomal subunit. Forms a loose heterodimer with protein S19. Forms two bridges to the 50S subunit in the 70S ribosome.

Functionally, located at the top of the head of the 30S subunit, it contacts several helices of the 16S rRNA. In the 70S ribosome it contacts the 23S rRNA (bridge B1a) and protein L5 of the 50S subunit (bridge B1b), connecting the 2 subunits; these bridges are implicated in subunit movement. Contacts the tRNAs in the A and P-sites. In Mesorhizobium japonicum (strain LMG 29417 / CECT 9101 / MAFF 303099) (Mesorhizobium loti (strain MAFF 303099)), this protein is Small ribosomal subunit protein uS13.